Reading from the N-terminus, the 347-residue chain is Merozoite surface protein 2 (347 aa).

A signal peptide spans 1-20 (MKVIKTLSIINFFIFVTFNI). Residues Asn-22 and Asn-36 are each glycosylated (N-linked (GlcNAc...) asparagine). The polymorphic region stretch occupies residues 44–273 (AESKPPTGDG…EQTESPELQS (230 aa)). A run of 22 repeats spans residues 53 to 60 (GAVASAGN), 61 to 68 (GAVASAGN), 69 to 76 (GAVASAGN), 77 to 84 (GAVASAGN), 85 to 88 (GAGN), 89 to 92 (GAGN), 93 to 96 (GAGN), 97 to 100 (GAGN), 101 to 104 (GAGN), 105 to 108 (GAGN), 109 to 112 (GAGN), 113 to 116 (GAGN), 117 to 120 (GAGN), 121 to 124 (GAGN), 125 to 128 (GAGN), 129 to 132 (GAGN), 133 to 136 (GAGN), 137 to 140 (GAGN), 141 to 144 (GAGN), 145 to 152 (GAVASAGN), 153 to 156 (GAGN), and 157 to 164 (GAVASAGN). The tract at residues 53–164 (GAVASAGNGA…GNGAVASAGN (112 aa)) is 6 X 8 AA repeats of G-A-V-A-S-A-G-N. Residues 85–156 (GAGNGAGNGA…VASAGNGAGN (72 aa)) form a 16 X 4 AA repeats of G-A-G-N region. Residues 165–206 (GAVAERSSSTPATTTTTTTTNDAEASTSTSSENSNHNNAETN) are compositionally biased toward low complexity. The disordered stretch occupies residues 165-308 (GAVAERSSST…DSQKECTDGN (144 aa)). Composition is skewed to polar residues over residues 213–240 (VQPN…NVPR) and 247–275 (KSPT…QSAP). Asn-224 is a glycosylation site (N-linked (GlcNAc...) asparagine). A glycan (N-linked (GlcNAc...) asparagine) is linked at Asn-296. A disulfide bond links Cys-304 and Cys-312. Asn-320 and Asn-321 each carry an N-linked (GlcNAc...) asparagine glycan. Asn-321 is lipidated: GPI-anchor amidated asparagine. Positions 322-347 (SSNIASINKFVVLISATLVLSFAIFI) are cleaved as a propeptide — removed in mature form.

It is found in the cell membrane. May play a role in the merozoite attachment to the erythrocyte. This Plasmodium falciparum (isolate Nig32 / Nigeria) protein is Merozoite surface protein 2.